Consider the following 315-residue polypeptide: Ribosomal RNA small subunit methyltransferase H (315 aa).

Residues 42–44 (GGH), D59, F96, D108, and Q115 each bind S-adenosyl-L-methionine.

This sequence belongs to the methyltransferase superfamily. RsmH family.

It is found in the cytoplasm. The catalysed reaction is cytidine(1402) in 16S rRNA + S-adenosyl-L-methionine = N(4)-methylcytidine(1402) in 16S rRNA + S-adenosyl-L-homocysteine + H(+). Its function is as follows. Specifically methylates the N4 position of cytidine in position 1402 (C1402) of 16S rRNA. The sequence is that of Ribosomal RNA small subunit methyltransferase H from Gemmatimonas aurantiaca (strain DSM 14586 / JCM 11422 / NBRC 100505 / T-27).